Reading from the N-terminus, the 460-residue chain is UDP-N-acetylmuramate--L-alanine ligase (460 aa).

An ATP-binding site is contributed by 116-122 (GSHGKTT).

Belongs to the MurCDEF family.

It is found in the cytoplasm. The enzyme catalyses UDP-N-acetyl-alpha-D-muramate + L-alanine + ATP = UDP-N-acetyl-alpha-D-muramoyl-L-alanine + ADP + phosphate + H(+). The protein operates within cell wall biogenesis; peptidoglycan biosynthesis. Cell wall formation. This Caldanaerobacter subterraneus subsp. tengcongensis (strain DSM 15242 / JCM 11007 / NBRC 100824 / MB4) (Thermoanaerobacter tengcongensis) protein is UDP-N-acetylmuramate--L-alanine ligase.